A 274-amino-acid polypeptide reads, in one-letter code: Insulin-like growth factor-binding protein-like 1 (274 aa).

The N-terminal stretch at 1 to 21 (MPRSPGLFLLLLVLQPLPALG) is a signal peptide. Positions 30–105 (RNPECGPCRP…PEGTGLCVCA (76 aa)) constitute an IGFBP N-terminal domain. Disulfide bonds link cysteine 34–cysteine 59, cysteine 37–cysteine 61, cysteine 42–cysteine 62, cysteine 48–cysteine 65, cysteine 73–cysteine 87, cysteine 81–cysteine 102, and cysteine 111–cysteine 147. Positions 91–149 (AAGAAPEGTGLCVCAQRGSVCGSDGRSYPSVCALRLRARQAPRALPGHLHKARDGPCEF) constitute a Kazal-like domain. Residues 151-255 (PVVITPPQSV…GEAQSHGTVT (105 aa)) form the Ig-like C2-type domain. N-linked (GlcNAc...) asparagine glycosylation is present at asparagine 162. A disulfide bond links cysteine 172 and cysteine 239.

The protein resides in the secreted. Its function is as follows. IGF-binding proteins prolong the half-life of IGFs and have been shown to either inhibit or stimulate the growth promoting effects of the IGFs in cell culture. They alter the interaction of IGFs with their cell surface receptors. The protein is Insulin-like growth factor-binding protein-like 1 (IGFBPL1) of Bos taurus (Bovine).